We begin with the raw amino-acid sequence, 289 residues long: Cbb3-type cytochrome c oxidase subunit FixP (289 aa).

The Cytoplasmic portion of the chain corresponds to 1–33 (MADKHKHVDEVSGVETTGHEWDGIRELNNPMPR). The helical transmembrane segment at 34-56 (WWVYSFYATIIWAIGYAIAYPSW) threads the bilayer. Over 57 to 289 (PMLTEATKGM…VFVHSLGGGE (233 aa)) the chain is Periplasmic. Cytochrome c domains lie at 110–198 (FAVS…VSLT) and 205–286 (HLVQ…HSLG). 8 residues coordinate heme c: C123, C126, H127, M175, C218, C221, H222, and M263.

The protein belongs to the CcoP / FixP family. As to quaternary structure, component of the cbb3-type cytochrome c oxidase at least composed of FixN, FixO, FixQ and FixP. Requires heme c as cofactor.

Its subcellular location is the cell inner membrane. It functions in the pathway energy metabolism; oxidative phosphorylation. In terms of biological role, C-type cytochrome. Part of the cbb3-type cytochrome c oxidase complex. FixP subunit is required for transferring electrons from donor cytochrome c via its heme groups to FixO subunit. From there, electrons are shuttled to the catalytic binuclear center of FixN subunit where oxygen reduction takes place. The complex also functions as a proton pump. This Rhizobium meliloti (strain 1021) (Ensifer meliloti) protein is Cbb3-type cytochrome c oxidase subunit FixP.